The chain runs to 887 residues: MEKEDKSFGIGMLDYNRENPESSGHSRVAVIRKQKTEQENNNLSWEDRHYIPDLHKSNKIKTPTSLADEKKSHNELDPKAQIKKLMETRSGGTYIPPAKLKALQAQLTDVNTPEYQRMQWEALKKSINGLINKVNKSNIRDIIPELFQENIIRGRALYCRSIMKAQAASLPFTPIYAAMTAVINTKFPQIGELLLTRLIVQFRKSFQRNDKSMCISSSSFIAHLINQKIAHEIVGLQILAVLLERPTNDSIEIAVMLLREIGAYLAEVSTRAYNGVFERFRTILHEGQLERRTQFIIEVLFQTRKDKFKNNPTIPQELDLVEEEDQITHYISLDDNLDVQESLGIFHYDPDYEENEKKYDAIKHEILGEEDDDENEEDEEDSEETSESEEDESVNDEKPQVIDQTNASLVNLRKSIYLTIMSSVDFEECCHKLLKIDLPEGQEIELCNMVIECNSQERTYAKFYGLIGERFCKLSRTWRSTYEQCFKNYYETIHRYETNRLRNIALFFANLLSTDSIGWEVYDCVRLTEDDTTASSRIFLKIMFQEIVEALGLKSLVERLHDPNLVPYLHGLFPVDEARNVRFSINYFTSIGLGALTEEMREYLLTMPKSEPKEQDSEGYSSGSETGSTYSSSYSSTYSRGRSYSRSTRSYSKSRSYSRSRSVTPINNINHKKYIRKDRELSPRGRERSSNRNSYSDLSRSSSLSRGRSRSYTPEGRLIESEDKGYRSRSSSPASRKYRSRQRYRRSYAGSTSRGRSFSRSPSYRRRLSMSCSVSYSRSPSPAARPISRSPARNKRSYDSLSYNRQYSPKVSRKRSNESRSPSPYTLRKQKTYHLNKRNEDFVVKMDKKGSESPVILAPWLREVDDGELYKDRNSESDSVRKQPRAD.

The interval 1–27 (MEKEDKSFGIGMLDYNRENPESSGHSR) is disordered. The region spanning 124–307 (KKSINGLINK…EVLFQTRKDK (184 aa)) is the MIF4G domain. Residues 366–401 (ILGEEDDDENEEDEEDSEETSESEEDESVNDEKPQV) are disordered. Positions 368 to 394 (GEEDDDENEEDEEDSEETSESEEDESV) are enriched in acidic residues. An MI domain is found at 411 to 527 (NLRKSIYLTI…GWEVYDCVRL (117 aa)). Disordered stretches follow at residues 607 to 834 (MPKS…KTYH) and 867 to 887 (GELY…PRAD). Residues 618-662 (EGYSSGSETGSTYSSSYSSTYSRGRSYSRSTRSYSKSRSYSRSRS) are compositionally biased toward low complexity. Residue Ser-662 is modified to Phosphoserine. Thr-664 is subject to Phosphothreonine. Positions 677-690 (KDRELSPRGRERSS) are enriched in basic and acidic residues. Low complexity predominate over residues 691-712 (NRNSYSDLSRSSSLSRGRSRSY). Residues 717–726 (RLIESEDKGY) are compositionally biased toward basic and acidic residues. The segment covering 736-746 (RKYRSRQRYRR) has biased composition (basic residues). Low complexity-rich tracts occupy residues 747–762 (SYAG…SRSP) and 769–791 (SMSC…SRSP). Residues 799–809 (DSLSYNRQYSP) are compositionally biased toward polar residues.

It belongs to the CWC22 family. In terms of assembly, belongs to the 40S cdc5-associated complex (or cwf complex), a spliceosome sub-complex reminiscent of a late-stage spliceosome composed of the U2, U5 and U6 snRNAs and at least brr2, cdc5, cwf2/prp3, cwf3/syf1, cwf4/syf3, cwf5/ecm2, spp42/cwf6, cwf7/spf27, cwf8, cwf9, cwf10, cwf11, cwf12, prp45/cwf13, cwf14, cwf15, cwf16, cwf17, cwf18, cwf19, cwf20, cwf21, cwf22, cwf23, cwf24, cwf25, cwf26, cyp7/cwf27, cwf28, cwf29/ist3, lea1, msl1, prp5/cwf1, prp10, prp12/sap130, prp17, prp22, sap61, sap62, sap114, sap145, slu7, smb1, smd1, smd3, smf1, smg1 and syf2.

It localises to the cytoplasm. The protein resides in the nucleus. May be involved in pre-mRNA splicing. In Schizosaccharomyces pombe (strain 972 / ATCC 24843) (Fission yeast), this protein is Pre-mRNA-splicing factor cwf22 (cwf22).